We begin with the raw amino-acid sequence, 271 residues long: Urease accessory protein UreD (271 aa).

This sequence belongs to the UreD family. As to quaternary structure, ureD, UreF and UreG form a complex that acts as a GTP-hydrolysis-dependent molecular chaperone, activating the urease apoprotein by helping to assemble the nickel containing metallocenter of UreC. The UreE protein probably delivers the nickel.

It localises to the cytoplasm. Required for maturation of urease via the functional incorporation of the urease nickel metallocenter. This chain is Urease accessory protein UreD, found in Halalkalibacterium halodurans (strain ATCC BAA-125 / DSM 18197 / FERM 7344 / JCM 9153 / C-125) (Bacillus halodurans).